The chain runs to 79 residues: Dolichyl-diphosphooligosaccharide--protein glycosyltransferase subunit TMEM258 (79 aa).

The next 2 helical transmembrane spans lie at 18–38 (LPLLATVLCGVGLLLLAAFTM) and 55–75 (FIAATSSIFLGFGSVFLLLWV).

It belongs to the OST5 family. As to quaternary structure, component of the oligosaccharyltransferase (OST) complex.

It is found in the membrane. It functions in the pathway protein modification; protein glycosylation. Subunit of the oligosaccharyl transferase (OST) complex that catalyzes the initial transfer of a defined glycan (Glc(3)Man(9)GlcNAc(2) in eukaryotes) from the lipid carrier dolichol-pyrophosphate to an asparagine residue within an Asn-X-Ser/Thr consensus motif in nascent polypeptide chains, the first step in protein N-glycosylation. N-glycosylation occurs cotranslationally and the complex associates with the Sec61 complex at the channel-forming translocon complex that mediates protein translocation across the endoplasmic reticulum (ER). All subunits are required for a maximal enzyme activity. The sequence is that of Dolichyl-diphosphooligosaccharide--protein glycosyltransferase subunit TMEM258 from Caenorhabditis briggsae.